The sequence spans 457 residues: tRNA modification GTPase MnmE (457 aa).

(6S)-5-formyl-5,6,7,8-tetrahydrofolate-binding residues include Arg-23, Glu-86, and Arg-125. The region spanning 221–377 (GVSVLIAGKP…LREAVFETFI (157 aa)) is the TrmE-type G domain. Asn-231 is a K(+) binding site. Residues 231-236 (NVGKSS), 250-256 (TSVPGTT), and 275-278 (DTAG) contribute to the GTP site. Ser-235 is a Mg(2+) binding site. Residues Thr-250, Val-252, and Thr-255 each contribute to the K(+) site. A Mg(2+)-binding site is contributed by Thr-256. Lys-457 is a binding site for (6S)-5-formyl-5,6,7,8-tetrahydrofolate.

This sequence belongs to the TRAFAC class TrmE-Era-EngA-EngB-Septin-like GTPase superfamily. TrmE GTPase family. Homodimer. Heterotetramer of two MnmE and two MnmG subunits. Requires K(+) as cofactor.

The protein localises to the cytoplasm. Its function is as follows. Exhibits a very high intrinsic GTPase hydrolysis rate. Involved in the addition of a carboxymethylaminomethyl (cmnm) group at the wobble position (U34) of certain tRNAs, forming tRNA-cmnm(5)s(2)U34. This Geobacter metallireducens (strain ATCC 53774 / DSM 7210 / GS-15) protein is tRNA modification GTPase MnmE.